The following is a 765-amino-acid chain: Amine oxidase [copper-containing] 3 (765 aa).

Residues 1–6 (MTQKTT) are Cytoplasmic-facing. The chain crosses the membrane as a helical; Signal-anchor for type II membrane protein span at residues 7–27 (LVLLALAVITIFALVCVLLAG). The Extracellular segment spans residues 28-765 (RSGDGGGLSQ…SHGGFAYRDN (738 aa)). The N-linked (GlcNAc...) asparagine glycan is linked to Asn137. A disulfide bridge connects residues Cys198 and Cys199. N-linked (GlcNAc...) asparagine glycosylation is found at Asn232 and Asn294. The active-site Proton acceptor is Asp386. An intrachain disulfide couples Cys404 to Cys430. The Schiff-base intermediate with substrate; via topaquinone role is filled by Tyr471. Position 471 is a 2',4',5'-topaquinone (Tyr471). Cu(2+) is bound by residues His520 and His522. Ca(2+)-binding residues include Asp529, Leu530, Asp531, and Glu572. An N-linked (GlcNAc...) asparagine glycan is attached at Asn592. A Ca(2+)-binding site is contributed by Glu641. The N-linked (GlcNAc...) asparagine glycan is linked to Asn659. Phe663 contributes to the Ca(2+) binding site. An N-linked (GlcNAc...) asparagine glycan is attached at Asn666. Ca(2+) contacts are provided by Glu667, Asp673, and Leu674. A Cu(2+)-binding site is contributed by His684. An intrachain disulfide couples Cys734 to Cys741.

Belongs to the copper/topaquinone oxidase family. As to quaternary structure, homodimer; disulfide-linked. Probably forms heterodimers with AOC2. Cu(2+) serves as cofactor. The cofactor is Ca(2+). L-topaquinone is required as a cofactor. Topaquinone (TPQ) is generated by copper-dependent autoxidation of a specific tyrosyl residue. Post-translationally, N- and O-glycosylated.

It is found in the cell membrane. It carries out the reaction methylamine + O2 + H2O = formaldehyde + H2O2 + NH4(+). The catalysed reaction is benzylamine + O2 + H2O = benzaldehyde + H2O2 + NH4(+). It catalyses the reaction 2-phenylethylamine + O2 + H2O = 2-phenylacetaldehyde + H2O2 + NH4(+). Catalyzes the oxidative deamination of primary amines to the corresponding aldehydes with the concomitant production of hydrogen peroxide and ammonia. Has a preference for the primary monoamines methylamine and benzylamine. Could also act on 2-phenylethylamine but much less efficiently. At endothelial cells surface can also function as a cell adhesion protein that participates in lymphocyte extravasation and recirculation by mediating the binding of lymphocytes to peripheral lymph node vascular endothelial cells in an L-selectin-independent fashion. This Mus musculus (Mouse) protein is Amine oxidase [copper-containing] 3.